The primary structure comprises 124 residues: Small ribosomal subunit protein uS12 (124 aa).

A disordered region spans residues 1 to 32; that stretch reads MPTISQLIRHGRQKQKKRTKSPALKSSPQRRG. Residues 9–20 show a composition bias toward basic residues; the sequence is RHGRQKQKKRTK. A 3-methylthioaspartic acid modification is found at D89.

Belongs to the universal ribosomal protein uS12 family. In terms of assembly, part of the 30S ribosomal subunit. Contacts proteins S8 and S17. May interact with IF1 in the 30S initiation complex.

Functionally, with S4 and S5 plays an important role in translational accuracy. In terms of biological role, interacts with and stabilizes bases of the 16S rRNA that are involved in tRNA selection in the A site and with the mRNA backbone. Located at the interface of the 30S and 50S subunits, it traverses the body of the 30S subunit contacting proteins on the other side and probably holding the rRNA structure together. The combined cluster of proteins S8, S12 and S17 appears to hold together the shoulder and platform of the 30S subunit. The chain is Small ribosomal subunit protein uS12 from Leptospira borgpetersenii serovar Hardjo-bovis (strain JB197).